Here is a 505-residue protein sequence, read N- to C-terminus: Protein disulfide-isomerase (505 aa).

The N-terminal stretch at 1–20 is a signal peptide; sequence MHKAQKFALGLLAAAAVATA. 2 consecutive Thioredoxin domains span residues 21–128 and 335–465; these read SDVV…QSLP and FVAG…ENGK. Catalysis depends on nucleophile residues C50, C53, C385, and C388. Cystine bridges form between C50–C53 and C385–C388. The interval 470–505 is disordered; the sequence is ISEDAEETSSATETTTETATKSEEAAKETATEHDEL. Positions 477 to 488 are enriched in low complexity; the sequence is TSSATETTTETA. Basic and acidic residues predominate over residues 489-505; that stretch reads TKSEEAAKETATEHDEL. The Prevents secretion from ER motif lies at 502–505; sequence HDEL.

The protein belongs to the protein disulfide isomerase family.

It localises to the endoplasmic reticulum lumen. The catalysed reaction is Catalyzes the rearrangement of -S-S- bonds in proteins.. Its function is as follows. Participates in the folding of proteins containing disulfide bonds, may be involved in glycosylation, prolyl hydroxylation and triglyceride transfer. The chain is Protein disulfide-isomerase from Humicola insolens (Soft-rot fungus).